The sequence spans 115 residues: Nucleoid-associated protein P9211_00201 (115 aa).

The protein belongs to the YbaB/EbfC family. In terms of assembly, homodimer.

It localises to the cytoplasm. Its subcellular location is the nucleoid. In terms of biological role, binds to DNA and alters its conformation. May be involved in regulation of gene expression, nucleoid organization and DNA protection. The polypeptide is Nucleoid-associated protein P9211_00201 (Prochlorococcus marinus (strain MIT 9211)).